A 79-amino-acid chain; its full sequence is Sulfur carrier protein TusA (79 aa).

The Cysteine persulfide intermediate role is filled by cysteine 17.

Belongs to the sulfur carrier protein TusA family.

Its subcellular location is the cytoplasm. Functionally, sulfur carrier protein which probably makes part of a sulfur-relay system. This is Sulfur carrier protein TusA from Actinobacillus succinogenes (strain ATCC 55618 / DSM 22257 / CCUG 43843 / 130Z).